A 187-amino-acid polypeptide reads, in one-letter code: MSYSHPASRYERVYVLRIGHRPERDKRITTHVGLVARAFGANGFILGDTCDEKVMESLKDVIDRWGGSMELACGVNSRRYVLEWKRAGGEVIHLTMYGLHVDDVIEEIKRSSKPKLIIVGAEKVPPFFYEYADYNVAIGHQPHSEVAALAIFLHKLYEGKELYIDFPRAKLRIVPSARGKKVVSREA.

Residues Leu94 and 120–124 (GAEKV) contribute to the S-adenosyl-L-methionine site.

Belongs to the aTrm56 family. In terms of assembly, homodimer.

It is found in the cytoplasm. It carries out the reaction cytidine(56) in tRNA + S-adenosyl-L-methionine = 2'-O-methylcytidine(56) in tRNA + S-adenosyl-L-homocysteine + H(+). Functionally, specifically catalyzes the AdoMet-dependent 2'-O-ribose methylation of cytidine at position 56 in tRNAs. This Hyperthermus butylicus (strain DSM 5456 / JCM 9403 / PLM1-5) protein is tRNA (cytidine(56)-2'-O)-methyltransferase.